We begin with the raw amino-acid sequence, 412 residues long: MADNKRIVLAYSGGLDTSVAISYLKERTGKDVVAVSLDVGQGGESLETIKQRALACGAVESYVVDARDEFANEYCMKALKANAMYEGVYPLVSAISRPLISKHLVRAAHQFGADTISHGCTGKGNDQVRFEVSIASIDPTLKAISPIRDLSLTRDVEIAFAKEHKLPITQTEKSPYSIDQNVWGRAIETGFLEDPWNGPTKDCYSYTDDPAFPPVEDEVVIEFKEGVPVKIDGRDVTPLQAIEEMNRRAGAQGVGRIDLIEDRLVGIKSRELYEAPGAVALITAHQELENCCLEREQHRIKRDIDKRWGELVYDAQWFSPATQSLNAFIEDTQKYVSGEIRMVLHGGRAVVTGRRSDSSLYDYKLATYDSGDTFDQKSSNGFIDIYGLPSRVAAARDVKFGNGIEVPKNTVE.

Residue 10–18 (AYSGGLDTS) participates in ATP binding. Y89 is an L-citrulline binding site. An ATP-binding site is contributed by G119. 3 residues coordinate L-aspartate: T121, N125, and D126. Residue N125 participates in L-citrulline binding. Positions 129, 177, 261, and 273 each coordinate L-citrulline.

Belongs to the argininosuccinate synthase family. Type 1 subfamily. As to quaternary structure, homotetramer.

The protein localises to the cytoplasm. The enzyme catalyses L-citrulline + L-aspartate + ATP = 2-(N(omega)-L-arginino)succinate + AMP + diphosphate + H(+). It functions in the pathway amino-acid biosynthesis; L-arginine biosynthesis; L-arginine from L-ornithine and carbamoyl phosphate: step 2/3. The polypeptide is Argininosuccinate synthase (Bifidobacterium longum (strain NCC 2705)).